A 311-amino-acid chain; its full sequence is 4-diphosphocytidyl-2-C-methyl-D-erythritol kinase (311 aa).

Lys-10 is a catalytic residue. Residue 105–115 coordinates ATP; that stretch reads PVAGGMAGGSA. Asp-146 is an active-site residue.

This sequence belongs to the GHMP kinase family. IspE subfamily.

The enzyme catalyses 4-CDP-2-C-methyl-D-erythritol + ATP = 4-CDP-2-C-methyl-D-erythritol 2-phosphate + ADP + H(+). It functions in the pathway isoprenoid biosynthesis; isopentenyl diphosphate biosynthesis via DXP pathway; isopentenyl diphosphate from 1-deoxy-D-xylulose 5-phosphate: step 3/6. Catalyzes the phosphorylation of the position 2 hydroxy group of 4-diphosphocytidyl-2C-methyl-D-erythritol. In Corynebacterium glutamicum (strain ATCC 13032 / DSM 20300 / JCM 1318 / BCRC 11384 / CCUG 27702 / LMG 3730 / NBRC 12168 / NCIMB 10025 / NRRL B-2784 / 534), this protein is 4-diphosphocytidyl-2-C-methyl-D-erythritol kinase.